The primary structure comprises 390 residues: Serine/threonine/tyrosine-protein kinase HT1 (390 aa).

The Protein kinase domain occupies 86–359 (LFIGNKFASG…GLPLTSHASL (274 aa)). Residues 92–100 (FASGAHSRI) and lysine 113 each bind ATP. Catalysis depends on aspartate 212, which acts as the Proton acceptor.

The protein belongs to the protein kinase superfamily. Ser/Thr protein kinase family. Interacts with DTX56. Binds to MPK4 and MPK12. Associates to CBC1 and CBC2. Autophosphorylated. In terms of tissue distribution, mainly localizes in guard cells. Expressed at low level in leaves, stems, roots and flowers.

The protein resides in the cell membrane. The enzyme catalyses L-seryl-[protein] + ATP = O-phospho-L-seryl-[protein] + ADP + H(+). The catalysed reaction is L-threonyl-[protein] + ATP = O-phospho-L-threonyl-[protein] + ADP + H(+). It carries out the reaction L-tyrosyl-[protein] + ATP = O-phospho-L-tyrosyl-[protein] + ADP + H(+). With respect to regulation, inhibited by MPK4 and MPK12. In terms of biological role, serine/threonine/tyrosine kinase involved in the control of stomatal movement in response to CO(2). Functions as a major negative regulator of CO(2)-induced stomatal closing. Does not seem to be involved in stomatal closure in response to abscisic acid (ABA) or light. Involved in the control of red light-induced stomatal opening. Is epistatic to SRK2E/OST1 function during stomatal responses to red light and altered CO(2). Phosphorylates SRK2E/OST1 and GHR1 to prevents SRK2E/OST1- and GHR1-induced activation of SLAC1, thus preventing stomatal closure. Mediates the phosphorylation of CBC1 and CBC2. The protein is Serine/threonine/tyrosine-protein kinase HT1 of Arabidopsis thaliana (Mouse-ear cress).